The primary structure comprises 468 residues: ATP synthase subunit beta 3 (468 aa).

155-162 (GGAGVGKT) serves as a coordination point for ATP.

Belongs to the ATPase alpha/beta chains family. In terms of assembly, F-type ATPases have 2 components, CF(1) - the catalytic core - and CF(0) - the membrane proton channel. CF(1) has five subunits: alpha(3), beta(3), gamma(1), delta(1), epsilon(1). CF(0) has three main subunits: a(1), b(2) and c(9-12). The alpha and beta chains form an alternating ring which encloses part of the gamma chain. CF(1) is attached to CF(0) by a central stalk formed by the gamma and epsilon chains, while a peripheral stalk is formed by the delta and b chains.

It is found in the cell inner membrane. The catalysed reaction is ATP + H2O + 4 H(+)(in) = ADP + phosphate + 5 H(+)(out). Functionally, produces ATP from ADP in the presence of a proton gradient across the membrane. The catalytic sites are hosted primarily by the beta subunits. This chain is ATP synthase subunit beta 3, found in Syntrophotalea carbinolica (strain DSM 2380 / NBRC 103641 / GraBd1) (Pelobacter carbinolicus).